Reading from the N-terminus, the 338-residue chain is Tryptophan--tRNA ligase (338 aa).

ATP-binding positions include 11 to 13 (QPS) and 19 to 20 (GN). A 'HIGH' region motif is present at residues 12–20 (PSGELSIGN). D135 lines the L-tryptophan pocket. Residues 147-149 (GSD), V189, and 198-202 (KMSKS) contribute to the ATP site. Residues 198–202 (KMSKS) carry the 'KMSKS' region motif.

It belongs to the class-I aminoacyl-tRNA synthetase family. In terms of assembly, homodimer.

The protein resides in the cytoplasm. It catalyses the reaction tRNA(Trp) + L-tryptophan + ATP = L-tryptophyl-tRNA(Trp) + AMP + diphosphate + H(+). Catalyzes the attachment of tryptophan to tRNA(Trp). This chain is Tryptophan--tRNA ligase, found in Vibrio vulnificus (strain YJ016).